We begin with the raw amino-acid sequence, 600 residues long: 1,8-cineole synthase 1, chloroplastic (600 aa).

Residues 1–31 (MATLRISSALIYQNTLTHHFRLRRPHRFVCK) constitute a chloroplast transit peptide. D342 lines the dimethylallyl diphosphate pocket. Mg(2+) contacts are provided by D342 and D346. The DDXXD motif signature appears at 342–346 (DDIYD). Residues E420, R484, and N487 each contribute to the dimethylallyl diphosphate site. Positions 487, 491, and 495 each coordinate Mg(2+).

The protein belongs to the terpene synthase family. Tpsb subfamily. Mg(2+) is required as a cofactor. Requires Mn(2+) as cofactor. In terms of tissue distribution, predominantly expressed in roots and at much lower levels in siliques. Not found in leaves, flowers or stems. Also detected in flowers in cv. Landsberg erecta. Not expressed in root apical meristem and elongation zone. Found in the vascular system of young roots and additionally in the cortex and epidermal cell layer of older roots.

It localises to the plastid. Its subcellular location is the chloroplast. It carries out the reaction (2E)-geranyl diphosphate + H2O = 1,8-cineole + diphosphate. It participates in secondary metabolite biosynthesis; terpenoid biosynthesis. Involved in monoterpene (C10) biosynthesis. The major product is 1,8-cineole (52%) followed by minor amounts of sabinene (14.5%), myrcene (13.3%), (-)-(1S)-beta-pinene (7.8%), (-)-(4S)-limonene (4.0%), (E)-beta-ocimene (2.7%), alpha-terpineol (2.4%), (-)-(1S)-alpha-pinene (1.9%), terpinolene (0.8%), and (+)-alpha-thujene (0.6%). The sequence is that of 1,8-cineole synthase 1, chloroplastic (TPS27) from Arabidopsis thaliana (Mouse-ear cress).